Consider the following 248-residue polypeptide: 2,3-bisphosphoglycerate-dependent phosphoglycerate mutase (248 aa).

Substrate-binding positions include 8–15 (RHGESIWN), 21–22 (TG), Arg60, 87–90 (EKHY), Lys98, 114–115 (RR), and 183–184 (GN). His9 functions as the Tele-phosphohistidine intermediate in the catalytic mechanism. Catalysis depends on Glu87, which acts as the Proton donor/acceptor.

It belongs to the phosphoglycerate mutase family. BPG-dependent PGAM subfamily.

It catalyses the reaction (2R)-2-phosphoglycerate = (2R)-3-phosphoglycerate. It participates in carbohydrate degradation; glycolysis; pyruvate from D-glyceraldehyde 3-phosphate: step 3/5. Its function is as follows. Catalyzes the interconversion of 2-phosphoglycerate and 3-phosphoglycerate. In Parabacteroides distasonis (strain ATCC 8503 / DSM 20701 / CIP 104284 / JCM 5825 / NCTC 11152), this protein is 2,3-bisphosphoglycerate-dependent phosphoglycerate mutase.